The following is a 787-amino-acid chain: LPS-assembly protein LptD (787 aa).

Positions 1-78 are disordered; the sequence is MAAGLPPLVV…AAGAAPAESG (78 aa). Residues 59–78 show a composition bias toward low complexity; it reads LPPVGTPAEPAAGAAPAESG.

The protein belongs to the LptD family. In terms of assembly, component of the lipopolysaccharide transport and assembly complex. Interacts with LptE and LptA.

Its function is as follows. Together with LptE, is involved in the assembly of lipopolysaccharide (LPS) at the surface of the outer membrane. The sequence is that of LPS-assembly protein LptD from Aromatoleum aromaticum (strain DSM 19018 / LMG 30748 / EbN1) (Azoarcus sp. (strain EbN1)).